Here is a 282-residue protein sequence, read N- to C-terminus: Probable aquaporin PIP2-6 (282 aa).

A run of 2 helical transmembrane segments spans residues Ala-39–Ile-59 and Leu-76–Ile-96. The short motif at Asn-102 to Ala-104 is the NPA 1 element. The next 3 membrane-spanning stretches (helical) occupy residues Val-121 to Ile-141, Gly-163 to Ala-183, and Val-197 to Ile-217. Positions Asn-223 to Ala-225 match the NPA 2 motif. A helical membrane pass occupies residues Ile-245 to Leu-265.

The protein belongs to the MIP/aquaporin (TC 1.A.8) family. PIP (TC 1.A.8.11) subfamily. As to expression, expressed in roots and leaves.

It localises to the cell membrane. In terms of biological role, aquaporins facilitate the transport of water and small neutral solutes across cell membranes. This Oryza sativa subsp. japonica (Rice) protein is Probable aquaporin PIP2-6 (PIP2-6).